We begin with the raw amino-acid sequence, 415 residues long: Histidine--tRNA ligase (415 aa).

Belongs to the class-II aminoacyl-tRNA synthetase family. As to quaternary structure, homodimer.

It localises to the cytoplasm. It carries out the reaction tRNA(His) + L-histidine + ATP = L-histidyl-tRNA(His) + AMP + diphosphate + H(+). This Rickettsia akari (strain Hartford) protein is Histidine--tRNA ligase.